Here is a 253-residue protein sequence, read N- to C-terminus: Sporulated oocyst TA4 antigen (253 aa).

Residues 1–23 (MARLSFVSLLSLSLLFGQQAVRA) form the signal peptide. Residues 182–184 (RRL) constitute a propeptide, removed in mature form.

As to quaternary structure, the TA4 antigen is composed of a 17 kDa and a 8 kDa chain, linked by a disulfide bond.

The polypeptide is Sporulated oocyst TA4 antigen (Eimeria tenella (Coccidian parasite)).